Here is an 87-residue protein sequence, read N- to C-terminus: Small ribosomal subunit protein bS20 (87 aa).

A compositionally biased stretch (basic residues) spans 1–11; the sequence is MANIKSKKKRI. The tract at residues 1–25 is disordered; sequence MANIKSKKKRIKTNEKARQRNKAIR.

It belongs to the bacterial ribosomal protein bS20 family.

Its function is as follows. Binds directly to 16S ribosomal RNA. The protein is Small ribosomal subunit protein bS20 of Corynebacterium kroppenstedtii (strain DSM 44385 / JCM 11950 / CIP 105744 / CCUG 35717).